Reading from the N-terminus, the 239-residue chain is Proteasome activator complex subunit 2 (239 aa).

Residue Ala2 is modified to N-acetylalanine. Phosphoserine is present on Ser10. A disordered region spans residues 65–86; that stretch reads DIPIPDPPPKDDEMETDKQEKK. Over residues 72-86 the composition is skewed to basic and acidic residues; it reads PPKDDEMETDKQEKK.

Belongs to the PA28 family. In terms of assembly, heterodimer of PSME1 and PSME2, which forms a hexameric ring.

Functionally, implicated in immunoproteasome assembly and required for efficient antigen processing. The PA28 activator complex enhances the generation of class I binding peptides by altering the cleavage pattern of the proteasome. This chain is Proteasome activator complex subunit 2 (PSME2), found in Bos taurus (Bovine).